The primary structure comprises 238 residues: Purine nucleoside phosphorylase DeoD-type (238 aa).

Histidine 4 contributes to the a purine D-ribonucleoside binding site. Phosphate is bound by residues glycine 20, arginine 24, arginine 43, and 87–90 (RVGS). A purine D-ribonucleoside contacts are provided by residues 179-181 (EME) and 203-204 (SD). Aspartate 204 acts as the Proton donor in catalysis.

Belongs to the PNP/UDP phosphorylase family. In terms of assembly, homohexamer; trimer of homodimers.

The enzyme catalyses a purine D-ribonucleoside + phosphate = a purine nucleobase + alpha-D-ribose 1-phosphate. It carries out the reaction a purine 2'-deoxy-D-ribonucleoside + phosphate = a purine nucleobase + 2-deoxy-alpha-D-ribose 1-phosphate. Functionally, catalyzes the reversible phosphorolytic breakdown of the N-glycosidic bond in the beta-(deoxy)ribonucleoside molecules, with the formation of the corresponding free purine bases and pentose-1-phosphate. The protein is Purine nucleoside phosphorylase DeoD-type of Histophilus somni (strain 129Pt) (Haemophilus somnus).